Here is a 120-residue protein sequence, read N- to C-terminus: NAD(P)H-quinone oxidoreductase subunit 3, chloroplastic (120 aa).

3 helical membrane-spanning segments follow: residues 9 to 29 (IFWA…IISG), 60 to 80 (ICYY…VFLY), and 88 to 108 (ILGV…IVGS).

The protein belongs to the complex I subunit 3 family. As to quaternary structure, NDH is composed of at least 16 different subunits, 5 of which are encoded in the nucleus.

It localises to the plastid. Its subcellular location is the chloroplast thylakoid membrane. The catalysed reaction is a plastoquinone + NADH + (n+1) H(+)(in) = a plastoquinol + NAD(+) + n H(+)(out). It carries out the reaction a plastoquinone + NADPH + (n+1) H(+)(in) = a plastoquinol + NADP(+) + n H(+)(out). Its function is as follows. NDH shuttles electrons from NAD(P)H:plastoquinone, via FMN and iron-sulfur (Fe-S) centers, to quinones in the photosynthetic chain and possibly in a chloroplast respiratory chain. The immediate electron acceptor for the enzyme in this species is believed to be plastoquinone. Couples the redox reaction to proton translocation, and thus conserves the redox energy in a proton gradient. This chain is NAD(P)H-quinone oxidoreductase subunit 3, chloroplastic, found in Morus indica (Mulberry).